The primary structure comprises 445 residues: tRNA-2-methylthio-N(6)-dimethylallyladenosine synthase (445 aa).

The MTTase N-terminal domain occupies 2 to 119 (KKLYIRTFGC…LPQLIAERRH (118 aa)). Residues cysteine 11, cysteine 48, cysteine 82, cysteine 156, cysteine 160, and cysteine 163 each coordinate [4Fe-4S] cluster. The Radical SAM core domain maps to 142–378 (RVEGASAFVS…RIDQQAQAIS (237 aa)). Residues 379 to 442 (QAMVGRVERA…PHSLRGEIVT (64 aa)) enclose the TRAM domain.

The protein belongs to the methylthiotransferase family. MiaB subfamily. Monomer. The cofactor is [4Fe-4S] cluster.

Its subcellular location is the cytoplasm. The enzyme catalyses N(6)-dimethylallyladenosine(37) in tRNA + (sulfur carrier)-SH + AH2 + 2 S-adenosyl-L-methionine = 2-methylsulfanyl-N(6)-dimethylallyladenosine(37) in tRNA + (sulfur carrier)-H + 5'-deoxyadenosine + L-methionine + A + S-adenosyl-L-homocysteine + 2 H(+). Functionally, catalyzes the methylthiolation of N6-(dimethylallyl)adenosine (i(6)A), leading to the formation of 2-methylthio-N6-(dimethylallyl)adenosine (ms(2)i(6)A) at position 37 in tRNAs that read codons beginning with uridine. The protein is tRNA-2-methylthio-N(6)-dimethylallyladenosine synthase of Aromatoleum aromaticum (strain DSM 19018 / LMG 30748 / EbN1) (Azoarcus sp. (strain EbN1)).